Here is a 152-residue protein sequence, read N- to C-terminus: MANLATLDHPYLPQSASLLFDAKAKANLTFEDIARHIGRNEVATAAIFYGQAKASKEDVVKLAELLRLPAQALEMQMGGFPDRGRSVDMPPREPLIYRLYEIVQNYGYAYKAVLNEKFGDGIMSAISFSTNVEKETDDDGNNWAVITLRGKW.

Catalysis depends on residues arginine 98, glutamate 101, and serine 124.

This sequence belongs to the cyanase family.

It carries out the reaction cyanate + hydrogencarbonate + 3 H(+) = NH4(+) + 2 CO2. Functionally, catalyzes the reaction of cyanate with bicarbonate to produce ammonia and carbon dioxide. This is Cyanate hydratase from Uncinocarpus reesii (strain UAMH 1704).